The sequence spans 537 residues: CTP synthase (537 aa).

The segment at 1–268 (MPFKCIFLTG…STFITEKLGL (268 aa)) is amidoligase domain. CTP is bound at residue Ser-14. Residue Ser-14 participates in UTP binding. An ATP-binding site is contributed by 15–20 (SLGKGL). Position 55 (Tyr-55) interacts with L-glutamine. Position 72 (Asp-72) interacts with ATP. 2 residues coordinate Mg(2+): Asp-72 and Glu-142. Residues 149 to 151 (DIE), 188 to 193 (KTKPTQ), and Lys-224 each bind CTP. Residues 188 to 193 (KTKPTQ) and Lys-224 contribute to the UTP site. The Glutamine amidotransferase type-1 domain maps to 294–533 (RIGLVGKYVQ…IQAALLYSKN (240 aa)). Gly-353 lines the L-glutamine pocket. Cys-380 functions as the Nucleophile; for glutamine hydrolysis in the catalytic mechanism. L-glutamine-binding positions include 381–384 (LGMQ), Glu-404, and Arg-461. Active-site residues include His-506 and Glu-508.

The protein belongs to the CTP synthase family. In terms of assembly, homotetramer.

The catalysed reaction is UTP + L-glutamine + ATP + H2O = CTP + L-glutamate + ADP + phosphate + 2 H(+). The enzyme catalyses L-glutamine + H2O = L-glutamate + NH4(+). It catalyses the reaction UTP + NH4(+) + ATP = CTP + ADP + phosphate + 2 H(+). It participates in pyrimidine metabolism; CTP biosynthesis via de novo pathway; CTP from UDP: step 2/2. Allosterically activated by GTP, when glutamine is the substrate; GTP has no effect on the reaction when ammonia is the substrate. The allosteric effector GTP functions by stabilizing the protein conformation that binds the tetrahedral intermediate(s) formed during glutamine hydrolysis. Inhibited by the product CTP, via allosteric rather than competitive inhibition. Functionally, catalyzes the ATP-dependent amination of UTP to CTP with either L-glutamine or ammonia as the source of nitrogen. Regulates intracellular CTP levels through interactions with the four ribonucleotide triphosphates. In Chlamydia caviae (strain ATCC VR-813 / DSM 19441 / 03DC25 / GPIC) (Chlamydophila caviae), this protein is CTP synthase.